The sequence spans 51 residues: Cuticle protein CP575 (51 aa).

The 51-residue stretch at 1–51 (GDIIDVDNDLFEHEQDGVAGTSVHGEYEAYDAYGNEYEVKYIADHLGFRVL) folds into the Chitin-binding type R&amp;R domain.

In terms of tissue distribution, calcified shell.

The sequence is that of Cuticle protein CP575 from Cancer pagurus (Rock crab).